The sequence spans 476 residues: Protein EARLY HEADING DATE 2 (476 aa).

The segment covering 1–13 (MLLSDLSSDQEAT) has biased composition (polar residues). Positions 1-27 (MLLSDLSSDQEATGSNSHGGGGGGDRM) are disordered. 2 consecutive C2H2-type zinc fingers follow at residues 106–128 (FVCE…RRGH) and 156–186 (YVCP…SRKH). 2 consecutive short sequence motifs (nuclear localization signal) follow at residues 124 to 131 (HRRGHNLP) and 178 to 185 (IKKHFSRK). The C2H2-type 2; degenerate zinc finger occupies 191–214 (WRCERCGKRYAVHSDWKAHVKNCG). The Zn(2+) site is built by Cys193, Cys196, His209, Cys213, Cys220, Cys222, His235, and Cys239. The CCHC-type 2; atypical zinc-finger motif lies at 218-241 (YRCDCGILFSRKDSLLTHRAFCDA). The tract at residues 228 to 240 (RKDSLLTHRAFCD) is SHR-binding.

The protein localises to the nucleus. Transcription activator that acts as a flowering master switch in both long and short days, independently of the circadian clock. Promotes flowering upstream of HD1 by up-regulating FTL1, FTL4, FTL5, FTL6, EHD1, HD3A and RFT1. Seems to repress FTL11 expression. May recognize the consensus motif 5'-TTTGTCGTAAT-3' in target gene promoters. This chain is Protein EARLY HEADING DATE 2, found in Oryza sativa subsp. indica (Rice).